The primary structure comprises 103 residues: Protamine-2 (103 aa).

The segment at 1-103 (MVRYRMRSLS…RTRRRRCRRH (103 aa)) is disordered. 2 positions are modified to phosphoserine: S8 and S10. Residues 8–17 (SLSERPHEVH) are compositionally biased toward basic and acidic residues. The span at 18 to 29 (GQQVHGQDQGHN) shows a compositional bias: low complexity. Residues 48 to 103 (HRGHSHHRRRRCSRRRLHRIHRRRHRSCRRRRRRSCRHRRRHRRGCRTRRRRCRRH) are compositionally biased toward basic residues.

The protein belongs to the protamine P2 family. In terms of assembly, interacts with TDRP. In terms of processing, proteolytic processing into mature chains is required for histone eviction during spermatogenesis. Transition proteins (TNP1 and TNP2) are required for processing. Testis.

The protein localises to the nucleus. It is found in the chromosome. Protamines substitute for histones in the chromatin of sperm during the haploid phase of spermatogenesis. They compact sperm DNA into a highly condensed, stable and inactive complex. In Macaca nemestrina (Pig-tailed macaque), this protein is Protamine-2 (PRM2).